Here is a 593-residue protein sequence, read N- to C-terminus: High affinity cGMP-specific 3',5'-cyclic phosphodiesterase 9A (593 aa).

The interval 87–141 (SAGVEDKRTTSRGQSAERPLRDRRVVGLEQPRREGAFESGQVEPRPREPQGCYQE) is disordered. Basic and acidic residues predominate over residues 104 to 122 (RPLRDRRVVGLEQPRREGA). Residues 236 to 557 (PRRDVPTYPK…DRYEELKRID (322 aa)) form the PDEase domain. Histidine 312 functions as the Proton donor in the catalytic mechanism. 312–316 (HNFRH) is a 3',5'-cyclic GMP binding site. Zn(2+) contacts are provided by histidine 316, histidine 352, and aspartate 353. Aspartate 353 is a 3',5'-cyclic GMP binding site. Aspartate 353 is a binding site for Mg(2+). Serine 379 is modified (phosphoserine). 3',5'-cyclic GMP-binding positions include aspartate 462, tyrosine 484, and 512-513 (AQ). Aspartate 462 is a Zn(2+) binding site. The segment at 564–593 (QKKTDSLTSGATEKSRERSRDVKNSEGDCA) is disordered. A compositionally biased stretch (basic and acidic residues) spans 576–593 (EKSRERSRDVKNSEGDCA).

This sequence belongs to the cyclic nucleotide phosphodiesterase family. PDE9 subfamily. Homodimer. Requires Zn(2+) as cofactor. It depends on Mg(2+) as a cofactor. In terms of tissue distribution, expressed in all tissues examined (testis, brain, small intestine, skeletal muscle, heart, lung, thymus, spleen, placenta, kidney, liver, pancreas, ovary and prostate) except blood. Highest levels in brain, heart, kidney, spleen, prostate and colon. Isoform PDE9A12 is found in prostate. In brain, present in the cortex, cerebellum, and subiculum (at protein level). In heart, primarily localizes to myocytes.

Its subcellular location is the cell projection. The protein localises to the ruffle membrane. It localises to the cytoplasm. The protein resides in the perinuclear region. It is found in the golgi apparatus. Its subcellular location is the endoplasmic reticulum. The protein localises to the cell membrane. It localises to the sarcolemma. It catalyses the reaction 3',5'-cyclic GMP + H2O = GMP + H(+). Its pathway is purine metabolism; 3',5'-cyclic GMP degradation; GMP from 3',5'-cyclic GMP: step 1/1. Inhibited by zaprinast; inhibitor is however not specific to PDE9A. Specifically inhibited by BAY-73-6691 (1-(2-chlorophenyl)-6-((2R)-3,3,3- trifluoro-2-methylpropyl)-1,5-dihydro-4H-pyrazolo(3,4-d)pyrimidine-4-one). BAY-73-9961 has two enantiomers, (R) and (S), due to the presence of a chiral center, and both forms vary in their pattern of interaction. Specifically inhibited by PF-4181366 (4H-Pyrazolo[3,4-d]pyrimidin-4-one, 1- cyclopentyl-1,5-dihydro-6-[(3S,4S)-4-methyl- 1-(6-quinoxalinylmethyl)-3-pyrrolidinyl]-one). Specifically inhibited by PF-4449613 ((R)-6-(1-(3-phenoxyazetidin-1-yl)ethyl)-1-(tetrahydro-2H-pyran-4-yl)-1H-pyrazolo[3,4-d]pyrimidin- 4(5H)-one). Specifically inhibited by inhibitor 28 (2-((1-(2-Chlorophenyl)-4-hydroxy-1Hpyrazolo[ 3,4-d]pyrimidin-6-yl)amino)-N-(4- methoxyphenyl)propanamide): inhibitor forms a hydrogen bond with Tyr-484 and Gln-513. Specifically inhibited by 1-Cyclopentyl-6-[(1r)-1-(3-phenoxyazetidin- 1-Yl)ethyl]-1,5-dihydro-4h-pyrazolo[3,4-D] pyrimidin-4-one: inhibitor forms a hydrogen bond with Tyr-484 and Gln-513. Functionally, specifically hydrolyzes the second messenger cGMP, which is a key regulator of many important physiological processes. Highly specific: compared to other members of the cyclic nucleotide phosphodiesterase family, has the highest affinity and selectivity for cGMP. Specifically regulates natriuretic-peptide-dependent cGMP signaling in heart, acting as a regulator of cardiac hypertrophy in myocytes and muscle. Does not regulate nitric oxide-dependent cGMP in heart. Additional experiments are required to confirm whether its ability to hydrolyze natriuretic-peptide-dependent cGMP is specific to heart or is a general feature of the protein. In brain, involved in cognitive function, such as learning and long-term memory. The sequence is that of High affinity cGMP-specific 3',5'-cyclic phosphodiesterase 9A from Homo sapiens (Human).